The chain runs to 350 residues: Biotin synthase (350 aa).

The region spanning 41–268 (NEVQISRLLS…KSRVRLSAGR (228 aa)) is the Radical SAM core domain. [4Fe-4S] cluster is bound by residues Cys-56, Cys-60, and Cys-63. [2Fe-2S] cluster-binding residues include Cys-100, Cys-131, Cys-191, and Arg-263.

The protein belongs to the radical SAM superfamily. Biotin synthase family. As to quaternary structure, homodimer. [4Fe-4S] cluster is required as a cofactor. It depends on [2Fe-2S] cluster as a cofactor.

The catalysed reaction is (4R,5S)-dethiobiotin + (sulfur carrier)-SH + 2 reduced [2Fe-2S]-[ferredoxin] + 2 S-adenosyl-L-methionine = (sulfur carrier)-H + biotin + 2 5'-deoxyadenosine + 2 L-methionine + 2 oxidized [2Fe-2S]-[ferredoxin]. The protein operates within cofactor biosynthesis; biotin biosynthesis; biotin from 7,8-diaminononanoate: step 2/2. Catalyzes the conversion of dethiobiotin (DTB) to biotin by the insertion of a sulfur atom into dethiobiotin via a radical-based mechanism. The chain is Biotin synthase from Shewanella piezotolerans (strain WP3 / JCM 13877).